Here is a 492-residue protein sequence, read N- to C-terminus: Probable glycine dehydrogenase (decarboxylating) subunit 2 (492 aa).

Lys274 is modified (N6-(pyridoxal phosphate)lysine).

This sequence belongs to the GcvP family. C-terminal subunit subfamily. As to quaternary structure, the glycine cleavage system is composed of four proteins: P, T, L and H. In this organism, the P 'protein' is a heterodimer of two subunits. It depends on pyridoxal 5'-phosphate as a cofactor.

The enzyme catalyses N(6)-[(R)-lipoyl]-L-lysyl-[glycine-cleavage complex H protein] + glycine + H(+) = N(6)-[(R)-S(8)-aminomethyldihydrolipoyl]-L-lysyl-[glycine-cleavage complex H protein] + CO2. Its function is as follows. The glycine cleavage system catalyzes the degradation of glycine. The P protein binds the alpha-amino group of glycine through its pyridoxal phosphate cofactor; CO(2) is released and the remaining methylamine moiety is then transferred to the lipoamide cofactor of the H protein. This chain is Probable glycine dehydrogenase (decarboxylating) subunit 2, found in Staphylococcus haemolyticus (strain JCSC1435).